Here is a 258-residue protein sequence, read N- to C-terminus: MGKTIVFKCGGSVIRELSDEFFQNLKDLTESGWKIALVHGGGPDITKMLKKLNIRTEFVNGQRKTTKAVLEVAEMVLSGSINKFFVAELTKHGLPAVGVSGKDGGLLLADYLNEKEYGQVGRIKKVNGQMAEALMEKGFIPVIAPLSMTDGCETLNVNADLAASAVAAALRADKLMFVTDVKGIMKNEEMLKELTPEDIESLIAEGVISGGMIPKVHSAKEALTDEVEEVMIVSGKGSFLTKDDFIGTKIIKQKEAVS.

Residues 41-42 (GG), Arg-63, and Asn-156 contribute to the substrate site.

Belongs to the acetylglutamate kinase family. ArgB subfamily.

The protein resides in the cytoplasm. It catalyses the reaction N-acetyl-L-glutamate + ATP = N-acetyl-L-glutamyl 5-phosphate + ADP. The protein operates within amino-acid biosynthesis; L-arginine biosynthesis; N(2)-acetyl-L-ornithine from L-glutamate: step 2/4. Catalyzes the ATP-dependent phosphorylation of N-acetyl-L-glutamate. The chain is Acetylglutamate kinase from Bacillus licheniformis (strain ATCC 14580 / DSM 13 / JCM 2505 / CCUG 7422 / NBRC 12200 / NCIMB 9375 / NCTC 10341 / NRRL NRS-1264 / Gibson 46).